Reading from the N-terminus, the 163-residue chain is Endoribonuclease YbeY (163 aa).

Zn(2+) contacts are provided by histidine 123, histidine 127, and histidine 133.

This sequence belongs to the endoribonuclease YbeY family. It depends on Zn(2+) as a cofactor.

It is found in the cytoplasm. Its function is as follows. Single strand-specific metallo-endoribonuclease involved in late-stage 70S ribosome quality control and in maturation of the 3' terminus of the 16S rRNA. In Helicobacter hepaticus (strain ATCC 51449 / 3B1), this protein is Endoribonuclease YbeY.